Reading from the N-terminus, the 336-residue chain is Inositol 2-dehydrogenase (336 aa).

This sequence belongs to the Gfo/Idh/MocA family. As to quaternary structure, homotetramer.

It carries out the reaction myo-inositol + NAD(+) = scyllo-inosose + NADH + H(+). In terms of biological role, involved in the oxidation of myo-inositol (MI) to 2-keto-myo-inositol (2KMI or 2-inosose). The polypeptide is Inositol 2-dehydrogenase (Paracoccus denitrificans (strain Pd 1222)).